The sequence spans 253 residues: Retinoic acid early-inducible protein 1-gamma (253 aa).

Residues 1 to 28 (MAKAAVTKRHHFMIQKLLILLSYGYTNG) form the signal peptide. A disulfide bridge connects residues Cys37 and Cys56. N-linked (GlcNAc...) asparagine glycosylation is found at Asn38, Asn70, Asn83, Asn143, and Asn156. Cys90 and Cys190 are oxidised to a cystine. Residues 198-230 (LKQSKEKPRSTSRSPSITQLTSTSPLPPPSHST) are disordered. A compositionally biased stretch (low complexity) spans 211–221 (SPSITQLTSTS). The GPI-anchor amidated serine moiety is linked to residue Ser227. Positions 228 to 253 (HSTSKKGFISVGLIFISLLFAFAFAM) are cleaved as a propeptide — removed in mature form.

This sequence belongs to the NKG2D ligand family. Post-translationally, glycosylated. As to expression, expressed predominantly in embryonic brain.

It is found in the cell membrane. In terms of biological role, acts as a ligand for KLRK1. This Mus musculus (Mouse) protein is Retinoic acid early-inducible protein 1-gamma (Raet1c).